Consider the following 249-residue polypeptide: Proteasome activator complex subunit 1 (249 aa).

The disordered stretch occupies residues 59–102 (APLDIPVPDPVKEKEKEERKKQQEKEEKEEKKKGDEDDKGPPCG). The span at 68–98 (PVKEKEKEERKKQQEKEEKEEKKKGDEDDKG) shows a compositional bias: basic and acidic residues.

It belongs to the PA28 family. As to quaternary structure, heterodimer of PSME1 and PSME2, which forms a hexameric ring. PSME1 can form homoheptamers.

In terms of biological role, implicated in immunoproteasome assembly and required for efficient antigen processing. The PA28 activator complex enhances the generation of class I binding peptides by altering the cleavage pattern of the proteasome. In Mus musculus (Mouse), this protein is Proteasome activator complex subunit 1 (Psme1).